A 124-amino-acid polypeptide reads, in one-letter code: Small ribosomal subunit protein uS13 (124 aa).

Residues 95 to 124 (GLPVRGQRTKTNARTRKGPKRTIAGKKKAR) are disordered.

It belongs to the universal ribosomal protein uS13 family. As to quaternary structure, part of the 30S ribosomal subunit. Forms a loose heterodimer with protein S19. Forms two bridges to the 50S subunit in the 70S ribosome.

In terms of biological role, located at the top of the head of the 30S subunit, it contacts several helices of the 16S rRNA. In the 70S ribosome it contacts the 23S rRNA (bridge B1a) and protein L5 of the 50S subunit (bridge B1b), connecting the 2 subunits; these bridges are implicated in subunit movement. Contacts the tRNAs in the A and P-sites. In Mycobacteroides abscessus (strain ATCC 19977 / DSM 44196 / CCUG 20993 / CIP 104536 / JCM 13569 / NCTC 13031 / TMC 1543 / L948) (Mycobacterium abscessus), this protein is Small ribosomal subunit protein uS13.